Consider the following 528-residue polypeptide: U3 small nucleolar RNA-associated protein 15 homolog (528 aa).

Position 2 is an N-acetylalanine (alanine 2). WD repeat units follow at residues 36-75 (KEFGAVSKVDFSPQPPYNYAVTASSRIHIYGRYSQEPVKT), 78-117 (RFKDTAYCATFRQDGQLLVAGSEDGVVQLFDISGRAPLRQ), 120-159 (GHTKAVHTVDFTADKYHVVSGADDYTVKLWDIPNSKEILT), 162-202 (EHSD…NVLC), 204-242 (EHGQPVESVLLFPSGGLLVSAGGRYVKVWDMLKGGQLLV), 246-285 (NHHKTVTCLCLSSSGQRLLSGSLDRKVKIYSTTSYKVVHS), and 287-326 (DYAASILSLALSHQDETVVVGMTNGILSVKHRKSEAKKES). Lysine 249 participates in a covalent cross-link: Glycyl lysine isopeptide (Lys-Gly) (interchain with G-Cter in SUMO2). Positions 508–528 (AELPEEKTESPRQPSDTDKNS) are disordered. Positions 511 to 528 (PEEKTESPRQPSDTDKNS) are enriched in basic and acidic residues.

In terms of assembly, part of the small subunit (SSU) processome, composed of more than 70 proteins and the RNA chaperone small nucleolar RNA (snoRNA) U3. May be a component of the proposed t-UTP subcomplex of the ribosomal small subunit (SSU) processome containing at least UTP4, WDR43, HEATR1, UTP15, WDR75. Interacts directly with UTP4 and WDR43.

The protein localises to the nucleus. Its subcellular location is the nucleolus. Ribosome biogenesis factor. Involved in nucleolar processing of pre-18S ribosomal RNA. Required for optimal pre-ribosomal RNA transcription by RNA polymerase I. Part of the small subunit (SSU) processome, first precursor of the small eukaryotic ribosomal subunit. During the assembly of the SSU processome in the nucleolus, many ribosome biogenesis factors, an RNA chaperone and ribosomal proteins associate with the nascent pre-rRNA and work in concert to generate RNA folding, modifications, rearrangements and cleavage as well as targeted degradation of pre-ribosomal RNA by the RNA exosome. This chain is U3 small nucleolar RNA-associated protein 15 homolog, found in Rattus norvegicus (Rat).